The primary structure comprises 77 residues: Acyl carrier protein (77 aa).

Positions 2–77 (AEVLEKVTKI…DAVKYIEANA (76 aa)) constitute a Carrier domain. Residue Ser37 is modified to O-(pantetheine 4'-phosphoryl)serine.

It belongs to the acyl carrier protein (ACP) family. Post-translationally, 4'-phosphopantetheine is transferred from CoA to a specific serine of apo-ACP by AcpS. This modification is essential for activity because fatty acids are bound in thioester linkage to the sulfhydryl of the prosthetic group.

Its subcellular location is the cytoplasm. It participates in lipid metabolism; fatty acid biosynthesis. In terms of biological role, carrier of the growing fatty acid chain in fatty acid biosynthesis. This is Acyl carrier protein from Listeria innocua serovar 6a (strain ATCC BAA-680 / CLIP 11262).